The chain runs to 208 residues: Ribosomal RNA large subunit methyltransferase E (208 aa).

S-adenosyl-L-methionine contacts are provided by glycine 62, tryptophan 64, aspartate 82, aspartate 98, and aspartate 123. Lysine 163 (proton acceptor) is an active-site residue.

It belongs to the class I-like SAM-binding methyltransferase superfamily. RNA methyltransferase RlmE family.

The protein localises to the cytoplasm. It carries out the reaction uridine(2552) in 23S rRNA + S-adenosyl-L-methionine = 2'-O-methyluridine(2552) in 23S rRNA + S-adenosyl-L-homocysteine + H(+). Its function is as follows. Specifically methylates the uridine in position 2552 of 23S rRNA at the 2'-O position of the ribose in the fully assembled 50S ribosomal subunit. The polypeptide is Ribosomal RNA large subunit methyltransferase E (Glaesserella parasuis serovar 5 (strain SH0165) (Haemophilus parasuis)).